Here is a 149-residue protein sequence, read N- to C-terminus: D-aminoacyl-tRNA deacylase (149 aa).

Residues 137–138 (GP) carry the Gly-cisPro motif, important for rejection of L-amino acids motif.

Belongs to the DTD family. Homodimer.

It is found in the cytoplasm. It carries out the reaction glycyl-tRNA(Ala) + H2O = tRNA(Ala) + glycine + H(+). The enzyme catalyses a D-aminoacyl-tRNA + H2O = a tRNA + a D-alpha-amino acid + H(+). Its function is as follows. An aminoacyl-tRNA editing enzyme that deacylates mischarged D-aminoacyl-tRNAs. Also deacylates mischarged glycyl-tRNA(Ala), protecting cells against glycine mischarging by AlaRS. Acts via tRNA-based rather than protein-based catalysis; rejects L-amino acids rather than detecting D-amino acids in the active site. By recycling D-aminoacyl-tRNA to D-amino acids and free tRNA molecules, this enzyme counteracts the toxicity associated with the formation of D-aminoacyl-tRNA entities in vivo and helps enforce protein L-homochirality. The chain is D-aminoacyl-tRNA deacylase from Clostridium botulinum (strain Kyoto / Type A2).